The sequence spans 505 residues: Megakaryocyte-associated tyrosine-protein kinase (505 aa).

Residues 46–108 enclose the SH3 domain; that stretch reads APGTQCMTKC…AAAALRHGEA (63 aa). The 90-residue stretch at 120–209 folds into the SH2 domain; it reads WFHGKISGQE…AICTKLVKPR (90 aa). Residues 233 to 481 enclose the Protein kinase domain; that stretch reads LTLGAQIGEG…IVEKLGRELR (249 aa). Residues 239 to 247 and lysine 260 contribute to the ATP site; that span reads IGEGEFGAV. The active-site Proton acceptor is aspartate 350. The interval 483–505 is disordered; the sequence is VGVSAPAGGQEAEGSAPTRSQDP.

The protein belongs to the protein kinase superfamily. Tyr protein kinase family. CSK subfamily. Interacts with KIT. As to expression, most abundant in brain, and to a lesser extent in the spleen, the thymus and the liver. Also found in the T-cell lineage.

Its subcellular location is the cytoplasm. The protein localises to the membrane. It catalyses the reaction L-tyrosyl-[protein] + ATP = O-phospho-L-tyrosyl-[protein] + ADP + H(+). Its function is as follows. Could play a significant role in the signal transduction of hematopoietic cells. May regulate tyrosine kinase activity of SRC-family members in brain by specifically phosphorylating their C-terminal regulatory tyrosine residue which acts as a negative regulatory site. It may play an inhibitory role in the control of T-cell proliferation. This is Megakaryocyte-associated tyrosine-protein kinase (Matk) from Mus musculus (Mouse).